The chain runs to 282 residues: Succinate dehydrogenase [ubiquinone] iron-sulfur subunit, mitochondrial (282 aa).

Residues 1-30 (MAAVVGVSLKRGFSATALGRVGLQFQACRE) constitute a mitochondrion transit peptide. Residues Lys-53 and Lys-57 each carry the N6-acetyllysine modification. The 80-residue stretch at 56-135 (DKPRMQTYKV…VSKIYPLPHM (80 aa)) folds into the 2Fe-2S ferredoxin-type domain. [2Fe-2S] cluster-binding residues include Cys-95, Cys-100, Cys-103, and Cys-115. The interaction with SDHAF1 stretch occupies residues 148 to 220 (FYAQYKSIEP…PAVLMQAYRW (73 aa)). Residues 178–208 (DREKLDGLYECILCACCSTSCPSYWWNGDKY) enclose the 4Fe-4S ferredoxin-type domain. 3 residues coordinate [4Fe-4S] cluster: Cys-188, Cys-191, and Cys-194. Cys-198 contributes to the [3Fe-4S] cluster binding site. A ubiquinone is bound at residue Trp-203. Cys-245 and Cys-251 together coordinate [3Fe-4S] cluster. Cys-255 lines the [4Fe-4S] cluster pocket.

This sequence belongs to the succinate dehydrogenase/fumarate reductase iron-sulfur protein family. As to quaternary structure, component of complex II composed of four subunits: the flavoprotein (FP) SDHA, iron-sulfur protein (IP) SDHB, and a cytochrome b560 composed of SDHC and SDHD. Interacts with SDHAF1; the interaction is required for iron-sulfur cluster incorporation into SDHB. [2Fe-2S] cluster serves as cofactor. [3Fe-4S] cluster is required as a cofactor. Requires [4Fe-4S] cluster as cofactor.

The protein localises to the mitochondrion inner membrane. It carries out the reaction a quinone + succinate = fumarate + a quinol. The catalysed reaction is (R)-malate + a quinone = enol-oxaloacetate + a quinol. It catalyses the reaction (S)-malate + a quinone = enol-oxaloacetate + a quinol. It participates in carbohydrate metabolism; tricarboxylic acid cycle; fumarate from succinate (eukaryal route): step 1/1. Enol-oxaloacetate inhibits the succinate dehydrogenase activity. Functionally, iron-sulfur protein (IP) subunit of the succinate dehydrogenase complex (mitochondrial respiratory chain complex II), responsible for transferring electrons from succinate to ubiquinone (coenzyme Q). SDH also oxidizes malate to the non-canonical enol form of oxaloacetate, enol-oxaloacetate. Enol-oxaloacetate, which is a potent inhibitor of the succinate dehydrogenase activity, is further isomerized into keto-oxaloacetate. The protein is Succinate dehydrogenase [ubiquinone] iron-sulfur subunit, mitochondrial (Sdhb) of Rattus norvegicus (Rat).